Here is a 79-residue protein sequence, read N- to C-terminus: UPF0150 protein ssr1765 (79 aa).

The protein belongs to the UPF0150 family.

The polypeptide is UPF0150 protein ssr1765 (Synechocystis sp. (strain ATCC 27184 / PCC 6803 / Kazusa)).